The primary structure comprises 440 residues: Thymidine phosphorylase (440 aa).

The protein belongs to the thymidine/pyrimidine-nucleoside phosphorylase family. Homodimer.

The catalysed reaction is thymidine + phosphate = 2-deoxy-alpha-D-ribose 1-phosphate + thymine. It participates in pyrimidine metabolism; dTMP biosynthesis via salvage pathway; dTMP from thymine: step 1/2. Functionally, the enzymes which catalyze the reversible phosphorolysis of pyrimidine nucleosides are involved in the degradation of these compounds and in their utilization as carbon and energy sources, or in the rescue of pyrimidine bases for nucleotide synthesis. This Escherichia coli (strain 55989 / EAEC) protein is Thymidine phosphorylase.